Reading from the N-terminus, the 190-residue chain is Small ribosomal subunit protein uS5 (190 aa).

The 64-residue stretch at 22 to 85 (FVDKLVHINR…ESAKRNLTRV (64 aa)) folds into the S5 DRBM domain.

Belongs to the universal ribosomal protein uS5 family. As to quaternary structure, part of the 30S ribosomal subunit. Contacts proteins S4 and S8.

With S4 and S12 plays an important role in translational accuracy. In terms of biological role, located at the back of the 30S subunit body where it stabilizes the conformation of the head with respect to the body. This is Small ribosomal subunit protein uS5 from Rhodopseudomonas palustris (strain BisA53).